Consider the following 28-residue polypeptide: Potassium channel toxin kappa-KTx 2.9 (28 aa).

2 cysteine pairs are disulfide-bonded: cysteine 4/cysteine 22 and cysteine 8/cysteine 18.

It belongs to the short scorpion toxin superfamily. Potassium channel inhibitor family. Gamma-KTx 2 subfamily. In terms of processing, contains 2 disulfide bonds. As to expression, expressed by the venom gland.

It is found in the secreted. Functionally, reversibly blocks voltage-gated potassium channels Kv1.2/KCNA2 and Kv1.3/KCNA3. The chain is Potassium channel toxin kappa-KTx 2.9 from Pandinus imperator (Emperor scorpion).